A 537-amino-acid polypeptide reads, in one-letter code: CTP synthase (537 aa).

Residues 1–265 (MVHFIFVTGG…DNKVLKFFNI (265 aa)) are amidoligase domain. S13 contacts CTP. S13 is a binding site for UTP. Residues 14 to 19 (SLGKGL) and D71 contribute to the ATP site. Mg(2+)-binding residues include D71 and E139. CTP is bound by residues 146-148 (DIE) and K222. K222 lines the UTP pocket. The Glutamine amidotransferase type-1 domain occupies 290-536 (RIAIIAKYHK…IKAAIEYNKC (247 aa)). G352 contributes to the L-glutamine binding site. Residue C379 is the Nucleophile; for glutamine hydrolysis of the active site. Residues 380–383 (FGMQ), E403, and R464 each bind L-glutamine. Active-site residues include H509 and E511.

Belongs to the CTP synthase family. Homotetramer.

The enzyme catalyses UTP + L-glutamine + ATP + H2O = CTP + L-glutamate + ADP + phosphate + 2 H(+). It catalyses the reaction L-glutamine + H2O = L-glutamate + NH4(+). It carries out the reaction UTP + NH4(+) + ATP = CTP + ADP + phosphate + 2 H(+). It participates in pyrimidine metabolism; CTP biosynthesis via de novo pathway; CTP from UDP: step 2/2. Its activity is regulated as follows. Allosterically activated by GTP, when glutamine is the substrate; GTP has no effect on the reaction when ammonia is the substrate. The allosteric effector GTP functions by stabilizing the protein conformation that binds the tetrahedral intermediate(s) formed during glutamine hydrolysis. Inhibited by the product CTP, via allosteric rather than competitive inhibition. Its function is as follows. Catalyzes the ATP-dependent amination of UTP to CTP with either L-glutamine or ammonia as the source of nitrogen. Regulates intracellular CTP levels through interactions with the four ribonucleotide triphosphates. The polypeptide is CTP synthase (Rickettsia conorii (strain ATCC VR-613 / Malish 7)).